Here is a 355-residue protein sequence, read N- to C-terminus: Methyltransferase FUS9 (355 aa).

Y18, N63, D86, S123, and F124 together coordinate S-adenosyl-L-homocysteine. F231 is a Mg(2+) binding site.

It belongs to the methyltransferase superfamily. Type-7 methyltransferase family. It depends on Mg(2+) as a cofactor.

The protein operates within mycotoxin biosynthesis. Its function is as follows. Methyltransferase; part of the gene cluster that mediates the biosynthesis of the mycotoxin fusarin C. Within the cluster, FUS1, FUS2, FUS8 and FUS9 are sufficient for fusarin production. The roles of the other FUS members are yet undetermined. The fusarin C synthetase FUS1 is responsible for the condensation of one acetyl-coenzyme A (CoA) unit with six malonyl-CoA units and the amide linkage of the arising heptaketide and homoserine, subsequently releasing the first intermediate, prefusarin, as an alcohol with an open ring structure. The cytochrome P450 monooxygenase FUS8 participates in multiple oxidation processes at carbon C-20 and is able to use the FUS1 product as substrate, resulting in formation of 20-hydroxy-prefusarin. This reaction seems to be essential before the 2-pyrrolidone ring closure can be catalyzed by FUS2, generating 20-hydroxy-fusarin. FUS8 is able to further oxidizes carbon C-20 after ring closure, resulting in the formation of carboxy-fusarin C. As the last step, FUS9 methylates the hydroxyl group at C-21 to generate fusarin C. Fusarin C can then rearrange to epi-fusarin C, the (z)-isomers, and fusarin A and fusarin D. The protein is Methyltransferase FUS9 of Gibberella fujikuroi (strain CBS 195.34 / IMI 58289 / NRRL A-6831) (Bakanae and foot rot disease fungus).